A 1273-amino-acid polypeptide reads, in one-letter code: Paired amphipathic helix protein Sin3a (1273 aa).

2 disordered regions span residues 1–23 and 87–110; these read MKRR…IPGS and HPTA…PPVA. S10 carries the post-translational modification Phosphoserine. One can recognise a PAH 1 domain in the interval 119 to 189; sequence QRLKVEDALS…MGFNTFLPPG (71 aa). The interaction with HCFC1 stretch occupies residues 119–196; sequence QRLKVEDALS…PPGYKIEVQT (78 aa). Glycyl lysine isopeptide (Lys-Gly) (interchain with G-Cter in SUMO2) cross-links involve residues K122 and K134. The interval 205-297 is disordered; sequence PGQVHQIPTH…ISLGTAPSLQ (93 aa). An interaction with REST region spans residues 205–480; the sequence is PGQVHQIPTH…RKALRSAEAY (276 aa). A compositionally biased stretch (low complexity) spans 228 to 237; the sequence is SQPSAQSAPA. The span at 238-248 shows a compositional bias: pro residues; sequence PAQPAPQPPPA. A compositionally biased stretch (polar residues) spans 252–266; sequence KPSQLQAHTPASQQT. Pro residues predominate over residues 267 to 282; that stretch reads PPLPPYASPRSPPVQP. At S277 the chain carries Phosphoserine. T284 carries the post-translational modification Phosphothreonine. Residues 284 to 297 are compositionally biased toward polar residues; sequence TPVTISLGTAPSLQ. Positions 300–383 constitute a PAH 2 domain; that stretch reads QPVEFNHAIN…SEFGQFLPDA (84 aa). Residues 398–446 are disordered; sequence DSVRNDHGGTVKKPQLNNKPQRPSQNGCQIRRHPTGTTPPVKKKPKLLN. Residues 412 to 425 are compositionally biased toward polar residues; it reads QLNNKPQRPSQNGC. Residues 456-525 form the PAH 3 domain; sequence SKHGGGTESL…NWFKNFLGYK (70 aa). Residues 458 to 525 form an interaction with SAP30 region; it reads HGGGTESLFF…NWFKNFLGYK (68 aa). K469 is modified (N6-acetyllysine). The interaction with NCOR1 stretch occupies residues 523 to 850; the sequence is GYKESVHLET…EMDVDEATGA (328 aa). An interaction with SUDS3 and SAP130 region spans residues 524–659; the sequence is YKESVHLETY…KFRLDNTLGG (136 aa). A Glycyl lysine isopeptide (Lys-Gly) (interchain with G-Cter in SUMO2) cross-link involves residue K563. Residues 687 to 829 form an interaction with HDAC1 and ARID4B region; the sequence is NPSIAVPIVL…IPDLLFAQRG (143 aa). S832 and S860 each carry phosphoserine. Residues K865 and K875 each carry the N6-acetyllysine modification. Residues 888-967 are interaction with OGT; it reads VNNNWYIFMR…YYPAFLDMVR (80 aa). A coiled-coil region spans residues 903–932; it reads CLRLLRICSQAERQIEEENREREWEREVLG. Residues S940, S1089, and S1112 each carry the phosphoserine modification. Residues 1136–1156 form a disordered region; it reads CQRGREQQEKEGKEGNSKKTM. Residues 1138–1156 are compositionally biased toward basic and acidic residues; the sequence is RGREQQEKEGKEGNSKKTM.

In terms of assembly, interacts with ARID4B, BRMS1L, HCFC1, HDAC1, HDAC2, MXI1, SAP30L, SAP130, SFPQ and TOPORS. Interacts with OGT (via TPRs 1-6); the interaction mediates transcriptional repression in parallel with histone deacetylase. Interacts with BAZ2A, MXD1, MXD3, MXD4, MBD2, DACH1, NCOR1, NR4A2, REST, RLIM, SAP30, SETDB1, SMYD2, and SUDS3. Interacts with PHF12 in a complex composed of HDAC1, PHF12 and SAP30. Interacts with TET1; the interaction recruits SIN3A to gene promoters. The large PER complex involved in the histone deacetylation is composed of at least HDAC1, PER2, SFPQ and SIN3A. Interacts with KLF11. Interacts with PPHLN1. Found in a complex with YY1, GON4L and HDAC1. Interacts (via PAH2) with FOXK1. Interacts with FOXK2. Found in a complex composed of at least SINHCAF, SIN3A, HDAC1, SAP30, RBBP4, OGT and TET1. Interacts with SINHCAF. Interacts with SPHK2. Post-translationally, SUMO1 sumoylated by TOPORS. Probably desumoylated by SENP2. As to expression, expressed in the developing brain, with highest levels of expression detected in the ventricular zone of various cortical regions.

It localises to the nucleus. It is found in the nucleolus. Acts as a transcriptional repressor. Corepressor for REST. Interacts with MXI1 to repress MYC responsive genes and antagonize MYC oncogenic activities. Also interacts with MXD1-MAX heterodimers to repress transcription by tethering SIN3A to DNA. Acts cooperatively with OGT to repress transcription in parallel with histone deacetylation. Involved in the control of the circadian rhythms. Required for the transcriptional repression of circadian target genes, such as PER1, mediated by the large PER complex through histone deacetylation. Cooperates with FOXK1 to regulate cell cycle progression probably by repressing cell cycle inhibitor genes expression. Required for cortical neuron differentiation and callosal axon elongation. The protein is Paired amphipathic helix protein Sin3a of Homo sapiens (Human).